A 668-amino-acid chain; its full sequence is Kinesin-like protein KIF2B (668 aa).

Thr-125 carries the phosphothreonine; by PLK1 modification. The stretch at 149-177 (CLREIEKLQKQREKRRRLQLEIRARRALD) forms a coiled coil. At Ser-204 the chain carries Phosphoserine; by PLK1. A Kinesin motor domain is found at 213 to 543 (RICVCVRKRP…LRYANRVKEL (331 aa)). ATP is bound at residue 303-310 (GQTGSGKT). Over residues 585–604 (PTVEKEEEKESDELTSKKEP) the composition is skewed to basic and acidic residues. Positions 585–605 (PTVEKEEEKESDELTSKKEPA) are disordered. Residues 646-667 (VLTDIQKKLQSLREDLQKKSQV) adopt a coiled-coil conformation.

It belongs to the TRAFAC class myosin-kinesin ATPase superfamily. Kinesin family. MCAK/KIF2 subfamily. Phosphorylation at Thr-125 by PLK1 is required for activity in the correction of kinetochore-microtubules attachment errors, while phosphorylation at Ser-204 also by PLK1 is required for the kinetochore localization and activity in prometaphase.

Its subcellular location is the cytoplasm. The protein localises to the cytoskeleton. It is found in the microtubule organizing center. The protein resides in the centrosome. It localises to the spindle. Its subcellular location is the chromosome. The protein localises to the centromere. It is found in the kinetochore. Its function is as follows. Plus end-directed microtubule-dependent motor required for spindle assembly and chromosome movement during mitosis. Has microtubule depolymerization activity. Plays a role in chromosome congression. The polypeptide is Kinesin-like protein KIF2B (Kif2b) (Mus musculus (Mouse)).